A 196-amino-acid chain; its full sequence is Imidazole glycerol phosphate synthase subunit HisH (196 aa).

In terms of domain architecture, Glutamine amidotransferase type-1 spans 2–196 (KVVILDTGCA…AQLLKNFLEM (195 aa)). Cys77 serves as the catalytic Nucleophile. Active-site residues include His178 and Glu180.

In terms of assembly, heterodimer of HisH and HisF.

It localises to the cytoplasm. The enzyme catalyses 5-[(5-phospho-1-deoxy-D-ribulos-1-ylimino)methylamino]-1-(5-phospho-beta-D-ribosyl)imidazole-4-carboxamide + L-glutamine = D-erythro-1-(imidazol-4-yl)glycerol 3-phosphate + 5-amino-1-(5-phospho-beta-D-ribosyl)imidazole-4-carboxamide + L-glutamate + H(+). It catalyses the reaction L-glutamine + H2O = L-glutamate + NH4(+). It participates in amino-acid biosynthesis; L-histidine biosynthesis; L-histidine from 5-phospho-alpha-D-ribose 1-diphosphate: step 5/9. IGPS catalyzes the conversion of PRFAR and glutamine to IGP, AICAR and glutamate. The HisH subunit catalyzes the hydrolysis of glutamine to glutamate and ammonia as part of the synthesis of IGP and AICAR. The resulting ammonia molecule is channeled to the active site of HisF. This Pectobacterium atrosepticum (strain SCRI 1043 / ATCC BAA-672) (Erwinia carotovora subsp. atroseptica) protein is Imidazole glycerol phosphate synthase subunit HisH.